The following is a 52-amino-acid chain: Conotoxin reg3h (52 aa).

A signal peptide is located at residue Ala-1. A propeptide spanning residues 2–33 (LPLDGDQPADQPAERMQDISPELNPLFHPVKR) is cleaved from the precursor. 3 disulfide bridges follow: Cys-35/Cys-49, Cys-36/Cys-47, and Cys-41/Cys-50. Pro-38, Pro-48, and Pro-51 each carry 4-hydroxyproline. Asn-52 is subject to Asparagine amide.

In terms of tissue distribution, expressed by the venom duct.

The protein localises to the secreted. The chain is Conotoxin reg3h from Conus regius (Crown cone).